The chain runs to 434 residues: 3-phosphoshikimate 1-carboxyvinyltransferase (434 aa).

Residues Lys-22, Ser-23, and Arg-27 each coordinate 3-phosphoshikimate. Lys-22 lines the phosphoenolpyruvate pocket. Phosphoenolpyruvate contacts are provided by Gly-93 and Arg-121. The 3-phosphoshikimate site is built by Ser-168, Ser-169, Gln-170, Ser-199, Asp-320, and Lys-347. Gln-170 contacts phosphoenolpyruvate. Catalysis depends on Asp-320, which acts as the Proton acceptor. The phosphoenolpyruvate site is built by Arg-351, Arg-394, and Lys-419.

This sequence belongs to the EPSP synthase family. Monomer.

Its subcellular location is the cytoplasm. The enzyme catalyses 3-phosphoshikimate + phosphoenolpyruvate = 5-O-(1-carboxyvinyl)-3-phosphoshikimate + phosphate. It functions in the pathway metabolic intermediate biosynthesis; chorismate biosynthesis; chorismate from D-erythrose 4-phosphate and phosphoenolpyruvate: step 6/7. Catalyzes the transfer of the enolpyruvyl moiety of phosphoenolpyruvate (PEP) to the 5-hydroxyl of shikimate-3-phosphate (S3P) to produce enolpyruvyl shikimate-3-phosphate and inorganic phosphate. The polypeptide is 3-phosphoshikimate 1-carboxyvinyltransferase (Burkholderia cenocepacia (strain HI2424)).